A 530-amino-acid chain; its full sequence is CTP synthase (530 aa).

The segment at M1–L264 is amidoligase domain. S13 contacts CTP. Position 13 (S13) interacts with UTP. G14–V19 contributes to the ATP binding site. Residue Y54 participates in L-glutamine binding. ATP is bound at residue D71. Residues D71 and E139 each coordinate Mg(2+). Residues D146 to E148, K185 to Q190, and K221 contribute to the CTP site. UTP-binding positions include K185–Q190 and K221. The 242-residue stretch at S289–R530 folds into the Glutamine amidotransferase type-1 domain. Position 351 (G351) interacts with L-glutamine. Residue C378 is the Nucleophile; for glutamine hydrolysis of the active site. L-glutamine contacts are provided by residues F379–Q382, E402, and R459. Residues H504 and E506 contribute to the active site.

This sequence belongs to the CTP synthase family. Homotetramer.

It carries out the reaction UTP + L-glutamine + ATP + H2O = CTP + L-glutamate + ADP + phosphate + 2 H(+). It catalyses the reaction L-glutamine + H2O = L-glutamate + NH4(+). The catalysed reaction is UTP + NH4(+) + ATP = CTP + ADP + phosphate + 2 H(+). Its pathway is pyrimidine metabolism; CTP biosynthesis via de novo pathway; CTP from UDP: step 2/2. Its activity is regulated as follows. Allosterically activated by GTP, when glutamine is the substrate; GTP has no effect on the reaction when ammonia is the substrate. The allosteric effector GTP functions by stabilizing the protein conformation that binds the tetrahedral intermediate(s) formed during glutamine hydrolysis. Inhibited by the product CTP, via allosteric rather than competitive inhibition. In terms of biological role, catalyzes the ATP-dependent amination of UTP to CTP with either L-glutamine or ammonia as the source of nitrogen. Regulates intracellular CTP levels through interactions with the four ribonucleotide triphosphates. The protein is CTP synthase of Pyrobaculum aerophilum (strain ATCC 51768 / DSM 7523 / JCM 9630 / CIP 104966 / NBRC 100827 / IM2).